The following is a 231-amino-acid chain: Ribose-5-phosphate isomerase A (231 aa).

Residues 28–31 (TGST), 83–86 (DGAD), and 96–99 (KGGG) each bind substrate. Glu-105 functions as the Proton acceptor in the catalytic mechanism. Lys-123 serves as a coordination point for substrate.

It belongs to the ribose 5-phosphate isomerase family. As to quaternary structure, homodimer.

It carries out the reaction aldehydo-D-ribose 5-phosphate = D-ribulose 5-phosphate. It functions in the pathway carbohydrate degradation; pentose phosphate pathway; D-ribose 5-phosphate from D-ribulose 5-phosphate (non-oxidative stage): step 1/1. Catalyzes the reversible conversion of ribose-5-phosphate to ribulose 5-phosphate. The sequence is that of Ribose-5-phosphate isomerase A from Sinorhizobium fredii (strain NBRC 101917 / NGR234).